The primary structure comprises 547 residues: CTP synthase (547 aa).

Residues 1-267 (MKTKFIFITG…DQKIAIMLRL (267 aa)) form an amidoligase domain region. Ser-14 contributes to the CTP binding site. Ser-14 contacts UTP. ATP contacts are provided by residues 15–20 (SLGKGL) and Asp-72. Asp-72 and Glu-141 together coordinate Mg(2+). Residues 148 to 150 (DIE), 188 to 193 (KTKPTQ), and Lys-224 contribute to the CTP site. Residues 188–193 (KTKPTQ) and Lys-224 contribute to the UTP site. One can recognise a Glutamine amidotransferase type-1 domain in the interval 292 to 545 (TIGIVGKYVD…IRAAKTHPAG (254 aa)). Residue Gly-354 participates in L-glutamine binding. Catalysis depends on Cys-381, which acts as the Nucleophile; for glutamine hydrolysis. L-glutamine-binding positions include 382 to 385 (LGMQ), Glu-405, and Arg-473. Catalysis depends on residues His-518 and Glu-520.

The protein belongs to the CTP synthase family. Homotetramer.

It catalyses the reaction UTP + L-glutamine + ATP + H2O = CTP + L-glutamate + ADP + phosphate + 2 H(+). The catalysed reaction is L-glutamine + H2O = L-glutamate + NH4(+). The enzyme catalyses UTP + NH4(+) + ATP = CTP + ADP + phosphate + 2 H(+). It functions in the pathway pyrimidine metabolism; CTP biosynthesis via de novo pathway; CTP from UDP: step 2/2. Its activity is regulated as follows. Allosterically activated by GTP, when glutamine is the substrate; GTP has no effect on the reaction when ammonia is the substrate. The allosteric effector GTP functions by stabilizing the protein conformation that binds the tetrahedral intermediate(s) formed during glutamine hydrolysis. Inhibited by the product CTP, via allosteric rather than competitive inhibition. In terms of biological role, catalyzes the ATP-dependent amination of UTP to CTP with either L-glutamine or ammonia as the source of nitrogen. Regulates intracellular CTP levels through interactions with the four ribonucleotide triphosphates. This chain is CTP synthase, found in Nitratidesulfovibrio vulgaris (strain DP4) (Desulfovibrio vulgaris).